Here is a 503-residue protein sequence, read N- to C-terminus: Aromatase 1 (503 aa).

C437 lines the heme pocket.

This sequence belongs to the cytochrome P450 family. Heme serves as cofactor.

Its subcellular location is the membrane. The enzyme catalyses testosterone + 3 reduced [NADPH--hemoprotein reductase] + 3 O2 = 17beta-estradiol + formate + 3 oxidized [NADPH--hemoprotein reductase] + 4 H2O + 4 H(+). The catalysed reaction is androst-4-ene-3,17-dione + 3 reduced [NADPH--hemoprotein reductase] + 3 O2 = estrone + formate + 3 oxidized [NADPH--hemoprotein reductase] + 4 H2O + 4 H(+). Its function is as follows. Catalyzes the formation of aromatic C18 estrogens from C19 androgens. This chain is Aromatase 1 (CYP19A1), found in Sus scrofa (Pig).